A 371-amino-acid polypeptide reads, in one-letter code: Glutamate 5-kinase 2 (371 aa).

ATP is bound at residue lysine 13. Substrate-binding residues include serine 53, aspartate 140, and asparagine 152. ATP is bound by residues serine 172–aspartate 173 and threonine 214–lysine 220. The region spanning glutamate 280 to aspartate 356 is the PUA domain.

This sequence belongs to the glutamate 5-kinase family.

Its subcellular location is the cytoplasm. The catalysed reaction is L-glutamate + ATP = L-glutamyl 5-phosphate + ADP. It participates in amino-acid biosynthesis; L-proline biosynthesis; L-glutamate 5-semialdehyde from L-glutamate: step 1/2. Catalyzes the transfer of a phosphate group to glutamate to form L-glutamate 5-phosphate. This Bacillus subtilis (strain 168) protein is Glutamate 5-kinase 2 (proJ).